We begin with the raw amino-acid sequence, 338 residues long: UDP-3-O-acylglucosamine N-acyltransferase (338 aa).

The Proton acceptor role is filled by His239.

This sequence belongs to the transferase hexapeptide repeat family. LpxD subfamily. In terms of assembly, homotrimer.

The enzyme catalyses a UDP-3-O-[(3R)-3-hydroxyacyl]-alpha-D-glucosamine + a (3R)-hydroxyacyl-[ACP] = a UDP-2-N,3-O-bis[(3R)-3-hydroxyacyl]-alpha-D-glucosamine + holo-[ACP] + H(+). Its pathway is bacterial outer membrane biogenesis; LPS lipid A biosynthesis. Functionally, catalyzes the N-acylation of UDP-3-O-acylglucosamine using 3-hydroxyacyl-ACP as the acyl donor. Is involved in the biosynthesis of lipid A, a phosphorylated glycolipid that anchors the lipopolysaccharide to the outer membrane of the cell. The sequence is that of UDP-3-O-acylglucosamine N-acyltransferase from Xylella fastidiosa (strain M23).